Here is a 777-residue protein sequence, read N- to C-terminus: Glucocorticoid receptor (777 aa).

Residues 1 to 14 (MDSKESLTPGREEN) are compositionally biased toward basic and acidic residues. Residues 1–23 (MDSKESLTPGREENPSSVLAQER) form a disordered region. The interval 1 to 420 (MDSKESLTPG…TATTGPPPKL (420 aa)) is modulating. Phosphothreonine is present on T8. The residue at position 23 (R23) is an Omega-N-methylarginine. 4 positions are modified to phosphoserine: S45, S113, S134, and S141. Residues 130 to 140 (NRSTSVPENPK) are compositionally biased toward polar residues. The disordered stretch occupies residues 130–183 (NRSTSVPENPKSSASTAVSAAPTEKEFPKTHSDISSEQQHLKGQTGTNGGNVKL). Positions 141-150 (SSASTAVSAA) are enriched in low complexity. Residues 152-163 (TEKEFPKTHSDI) show a composition bias toward basic and acidic residues. Polar residues predominate over residues 164 to 174 (SSEQQHLKGQT). Phosphoserine occurs at positions 203, 211, and 226. A Glycyl lysine isopeptide (Lys-Gly) (interchain with G-Cter in SUMO2) cross-link involves residue K258. Phosphoserine is present on S267. Glycyl lysine isopeptide (Lys-Gly) (interchain with G-Cter in SUMO); alternate cross-links involve residues K277 and K293. Glycyl lysine isopeptide (Lys-Gly) (interchain with G-Cter in SUMO2); alternate cross-links involve residues K277 and K293. The span at 394–414 (SSPSMRPDVSSPPSSSSTATT) shows a compositional bias: low complexity. The interval 394 to 415 (SSPSMRPDVSSPPSSSSTATTG) is disordered. At S404 the chain carries Phosphoserine. Residue K419 forms a Glycyl lysine isopeptide (Lys-Gly) (interchain with G-Cter in ubiquitin) linkage. 2 consecutive NR C4-type zinc fingers follow at residues 421–441 (CLVC…CGSC) and 457–476 (CAGR…CPAC). The nuclear receptor DNA-binding region spans 421–486 (CLVCSDEASG…RYRKCLQAGM (66 aa)). N6-acetyllysine occurs at positions 480, 492, 494, and 495. The interval 485–777 (GMNLEARKTK…NIKKLLFHQK (293 aa)) is interaction with CLOCK. The segment at 487–523 (NLEARKTKKKIKGIQQATTGVSQETPENPANKTIVPA) is hinge. The 235-residue stretch at 524–758 (TLPQLTPTLV…FPEMLAEIIT (235 aa)) folds into the NR LBD domain. The tract at residues 532–697 (LVSLLEVIEP…EIRMTYIKEL (166 aa)) is interaction with CRY1. K703 is covalently cross-linked (Glycyl lysine isopeptide (Lys-Gly) (interchain with G-Cter in SUMO)).

Belongs to the nuclear hormone receptor family. NR3 subfamily. As to quaternary structure, heteromultimeric cytoplasmic complex with HSP90AA1, HSPA1A/HSPA1B, and FKBP5 or another immunophilin such as PPID, STIP1, or the immunophilin homolog PPP5C. Upon ligand binding FKBP5 dissociates from the complex and FKBP4 takes its place, thereby linking the complex to dynein and mediating transport to the nucleus, where the complex dissociates. Probably forms a complex composed of chaperones HSP90 and HSP70, co-chaperones CDC37, PPP5C, TSC1 and client protein TSC2, CDK4, AKT, RAF1 and NR3C1; this complex does not contain co-chaperones STIP1/HOP and PTGES3/p23. Directly interacts with UNC45A. Binds to DNA as a homodimer, and as heterodimer with NR3C2 or the retinoid X receptor. Binds STAT5A and STAT5B homodimers and heterodimers. Interacts with NRIP1, POU2F1, POU2F2 and TRIM28. Interacts with several coactivator complexes, including the SMARCA4 complex, CREBBP/EP300, TADA2L (Ada complex) and p160 coactivators such as NCOA2 and NCOA6. Interaction with BAG1 inhibits transactivation. Interacts with HEXIM1 and TGFB1I1. Interacts with NCOA1. Interacts with NCOA3, SMARCA4, SMARCC1, SMARCD1, and SMARCE1. Interacts with CLOCK, CRY1 and CRY2 in a ligand-dependent fashion. Interacts with CIART. Interacts with RWDD3. Interacts with UBE2I/UBC9 and this interaction is enhanced in the presence of RWDD3. Interacts with GRIP1. Interacts with NR4A3 (via nuclear receptor DNA-binding domain), represses transcription activity of NR4A3 on the POMC promoter Nur response element (NurRE). Directly interacts with PNRC2 to attract and form a complex with UPF1 and DCP1A; the interaction leads to rapid mRNA degradation. Interacts with GSK3B. Interacts with FNIP1 and FNIP2. Interacts (via C-terminus) with HNRNPU (via C-terminus). Interacts with MCM3AP. Interacts (via domain NR LBD) with HSP90AA1 and HSP90AB1. In the absence of hormonal ligand, interacts with TACC1. Interacts (via NR LBD domain) with ZNF764 (via KRAB domain); the interaction regulates transcription factor activity of NR3C1 by directing its actions toward certain biologic pathways. In terms of processing, acetylation by CLOCK reduces its binding to glucocorticoid response elements and its transcriptional activity. Post-translationally, increased proteasome-mediated degradation in response to glucocorticoids. Phosphorylated in the absence of hormone; becomes hyperphosphorylated in the presence of glucocorticoid. The Ser-203, Ser-226 and Ser-404-phosphorylated forms are mainly cytoplasmic, and the Ser-211-phosphorylated form is nuclear. Phosphorylation at Ser-211 increases transcriptional activity. Phosphorylation at Ser-203, Ser-226 and Ser-404 decreases signaling capacity. Phosphorylation at Ser-404 may protect from glucocorticoid-induced apoptosis. Phosphorylation at Ser-203 and Ser-211 is not required in regulation of chromosome segregation. May be dephosphorylated by PPP5C, attenuates NR3C1 action. In terms of processing, ubiquitinated by UBR5, leading to its degradation: UBR5 specifically recognizes and binds ligand-bound NR3C1 when it is not associated with coactivators (NCOAs). In presence of NCOAs, the UBR5-degron is not accessible, preventing its ubiquitination and degradation. Post-translationally, sumoylation at Lys-277 and Lys-293 negatively regulates its transcriptional activity. Sumoylation at Lys-703 positively regulates its transcriptional activity in the presence of RWDD3. Sumoylation at Lys-277 and Lys-293 is dispensable whereas sumoylation at Lys-703 is critical for the stimulatory effect of RWDD3 on its transcriptional activity. Heat shock increases sumoylation in a RWDD3-dependent manner.

The protein resides in the cytoplasm. The protein localises to the nucleus. It localises to the mitochondrion. Its subcellular location is the cytoskeleton. It is found in the spindle. The protein resides in the microtubule organizing center. The protein localises to the centrosome. It localises to the chromosome. Its subcellular location is the nucleoplasm. Receptor for glucocorticoids (GC). Has a dual mode of action: as a transcription factor that binds to glucocorticoid response elements (GRE), both for nuclear and mitochondrial DNA, and as a modulator of other transcription factors. Affects inflammatory responses, cellular proliferation and differentiation in target tissues. Involved in chromatin remodeling. Plays a role in rapid mRNA degradation by binding to the 5' UTR of target mRNAs and interacting with PNRC2 in a ligand-dependent manner which recruits the RNA helicase UPF1 and the mRNA-decapping enzyme DCP1A, leading to RNA decay. Could act as a coactivator for STAT5-dependent transcription upon growth hormone (GH) stimulation and could reveal an essential role of hepatic GR in the control of body growth. Mediates glucocorticoid-induced apoptosis. Promotes accurate chromosome segregation during mitosis. May act as a tumor suppressor. May play a negative role in adipogenesis through the regulation of lipolytic and antilipogenic gene expression. In Pongo abelii (Sumatran orangutan), this protein is Glucocorticoid receptor (NR3C1).